Reading from the N-terminus, the 92-residue chain is Small ribosomal subunit protein bS18c (92 aa).

Belongs to the bacterial ribosomal protein bS18 family. As to quaternary structure, part of the 30S ribosomal subunit.

The protein resides in the plastid. In Epifagus virginiana (Beechdrops), this protein is Small ribosomal subunit protein bS18c (rps18).